The following is a 492-amino-acid chain: Bifunctional shikimate kinase/3-dehydroquinate synthase (492 aa).

The interval 1-161 (MRIFLVGMMG…TALVVLEALD (161 aa)) is shikimate kinase. 10–15 (GSGKST) serves as a coordination point for ATP. Mg(2+) is bound at residue serine 14. Residues aspartate 32, arginine 56, and glycine 78 each contribute to the substrate site. Arginine 114 serves as a coordination point for ATP. Arginine 131 contacts substrate. The segment at 162–492 (EKEISTIEKP…DPLELLEVVD (331 aa)) is 3-dehydroquinate synthase.

In the N-terminal section; belongs to the shikimate kinase family. This sequence in the C-terminal section; belongs to the sugar phosphate cyclases superfamily. Dehydroquinate synthase family. Mg(2+) is required as a cofactor. Requires NAD(+) as cofactor. It depends on a divalent metal cation as a cofactor.

The protein localises to the cytoplasm. The catalysed reaction is 7-phospho-2-dehydro-3-deoxy-D-arabino-heptonate = 3-dehydroquinate + phosphate. It catalyses the reaction shikimate + ATP = 3-phosphoshikimate + ADP + H(+). The protein operates within metabolic intermediate biosynthesis; chorismate biosynthesis; chorismate from D-erythrose 4-phosphate and phosphoenolpyruvate: step 2/7. It functions in the pathway metabolic intermediate biosynthesis; chorismate biosynthesis; chorismate from D-erythrose 4-phosphate and phosphoenolpyruvate: step 5/7. Functionally, catalyzes the specific phosphorylation of the 3-hydroxyl group of shikimic acid using ATP as a cosubstrate. The sequence is that of Bifunctional shikimate kinase/3-dehydroquinate synthase (aroKB) from Thermotoga maritima (strain ATCC 43589 / DSM 3109 / JCM 10099 / NBRC 100826 / MSB8).